A 267-amino-acid polypeptide reads, in one-letter code: DNA repair protein RecO (267 aa).

This sequence belongs to the RecO family.

Its function is as follows. Involved in DNA repair and RecF pathway recombination. This is DNA repair protein RecO from Mesoplasma florum (strain ATCC 33453 / NBRC 100688 / NCTC 11704 / L1) (Acholeplasma florum).